The primary structure comprises 326 residues: 4-hydroxythreonine-4-phosphate dehydrogenase (326 aa).

2 residues coordinate substrate: histidine 133 and threonine 134. Histidine 163, histidine 208, and histidine 263 together coordinate a divalent metal cation. Substrate contacts are provided by lysine 271, asparagine 280, and arginine 289.

The protein belongs to the PdxA family. Homodimer. Zn(2+) is required as a cofactor. The cofactor is Mg(2+). Requires Co(2+) as cofactor.

The protein resides in the cytoplasm. The enzyme catalyses 4-(phosphooxy)-L-threonine + NAD(+) = 3-amino-2-oxopropyl phosphate + CO2 + NADH. It functions in the pathway cofactor biosynthesis; pyridoxine 5'-phosphate biosynthesis; pyridoxine 5'-phosphate from D-erythrose 4-phosphate: step 4/5. Its function is as follows. Catalyzes the NAD(P)-dependent oxidation of 4-(phosphooxy)-L-threonine (HTP) into 2-amino-3-oxo-4-(phosphooxy)butyric acid which spontaneously decarboxylates to form 3-amino-2-oxopropyl phosphate (AHAP). In Pseudoalteromonas atlantica (strain T6c / ATCC BAA-1087), this protein is 4-hydroxythreonine-4-phosphate dehydrogenase.